A 158-amino-acid polypeptide reads, in one-letter code: Large ribosomal subunit protein bL35m (158 aa).

Belongs to the bacterial ribosomal protein bL35 family.

The protein localises to the mitochondrion. This is Large ribosomal subunit protein bL35m (mrpl-35) from Caenorhabditis elegans.